Consider the following 515-residue polypeptide: Gap junction alpha-9 protein (515 aa).

The Cytoplasmic portion of the chain corresponds to 1–19 (MGDWNLLGDTLEEVHIHST). Residues 20–40 (MIGKIWLTILFIFRMLVLGVA) form a helical membrane-spanning segment. The Extracellular portion of the chain corresponds to 41–77 (AEDVWNDEQSGFICNTEQPGCRNVCYDQAFPISLIRY). Residues 78-98 (WVLQVIFVSSPSLVYMGHALY) form a helical membrane-spanning segment. Topologically, residues 99 to 166 (RLRVLEEERQ…YVIHIFTRSV (68 aa)) are cytoplasmic. A helical transmembrane segment spans residues 167-187 (VEVGFMIGQYLLYGFHLEPLF). The Extracellular segment spans residues 188–209 (KCHGHPCPNIIDCFVSRPTEKT). A helical transmembrane segment spans residues 210–230 (IFLLFMQSIATISLFLNILEI). Residues 231–515 (FHLGFKKIKR…GRRVPTDLQI (285 aa)) are Cytoplasmic-facing. The span at 370 to 380 (KRETEGKDSKR) shows a compositional bias: basic and acidic residues. Disordered regions lie at residues 370–400 (KRETEGKDSKRNYYSRGHRSIPGVAIDGENN) and 428–472 (SSTE…NTAD). Residues 456–472 (PPSQGDSQSLDIPNTAD) show a composition bias toward polar residues.

It belongs to the connexin family. Alpha-type (group II) subfamily. A connexon is composed of a hexamer of connexins. In terms of tissue distribution, highly abundant in skeletal muscle. Also detected in testis.

It is found in the cell membrane. The protein localises to the cell junction. Its subcellular location is the gap junction. In terms of biological role, one gap junction consists of a cluster of closely packed pairs of transmembrane channels, the connexons, through which materials of low MW diffuse from one cell to a neighboring cell. In Homo sapiens (Human), this protein is Gap junction alpha-9 protein (GJA9).